A 46-amino-acid polypeptide reads, in one-letter code: MNRSGKHLISSIILYPRPSGECISSISLDKQTQATTSPLYFCWREK.

Its function is as follows. Required for the development of competence. The chain is Competence protein S (comS) from Bacillus subtilis (strain 168).